Here is a 243-residue protein sequence, read N- to C-terminus: Small ribosomal subunit protein uS5 (243 aa).

The disordered stretch occupies residues 1 to 54; it reads MSDNEKETQVAEETQNTQATAESSNNDERRGRRNNRGGEGRRGDRRGRREDNHE. Residues 11 to 24 show a composition bias toward polar residues; sequence AEETQNTQATAESS. The span at 26–54 shows a compositional bias: basic and acidic residues; it reads NDERRGRRNNRGGEGRRGDRRGRREDNHE. The S5 DRBM domain occupies 57–120; the sequence is MLDRVVTINR…LDAKKHLFNV (64 aa).

This sequence belongs to the universal ribosomal protein uS5 family. Part of the 30S ribosomal subunit. Contacts proteins S4 and S8.

Functionally, with S4 and S12 plays an important role in translational accuracy. In terms of biological role, located at the back of the 30S subunit body where it stabilizes the conformation of the head with respect to the body. The protein is Small ribosomal subunit protein uS5 of Bifidobacterium animalis subsp. lactis (strain AD011).